We begin with the raw amino-acid sequence, 802 residues long: Lon protease (802 aa).

In terms of domain architecture, Lon N-terminal spans 17-211 (SIVMPLFEVV…LFLHILTKHK (195 aa)). 363–370 (GPPGTGKT) is an ATP binding site. The Lon proteolytic domain occupies 600–780 (ENVPGVVTGL…EEVLREALDI (181 aa)). Residues S686 and K729 contribute to the active site.

The protein belongs to the peptidase S16 family. In terms of assembly, homohexamer. Organized in a ring with a central cavity.

The protein resides in the cytoplasm. The enzyme catalyses Hydrolysis of proteins in presence of ATP.. ATP-dependent serine protease that mediates the selective degradation of mutant and abnormal proteins as well as certain short-lived regulatory proteins. Required for cellular homeostasis and for survival from DNA damage and developmental changes induced by stress. Degrades polypeptides processively to yield small peptide fragments that are 5 to 10 amino acids long. Binds to DNA in a double-stranded, site-specific manner. The polypeptide is Lon protease (Methanosarcina barkeri (strain Fusaro / DSM 804)).